The sequence spans 222 residues: Iodotyrosine deiodinase (222 aa).

FMN contacts are provided by residues R34–R38 and P61–S62. 3 residues coordinate 3-iodo-L-tyrosine: E91, Y95, and K116. FMN is bound by residues T171–T173 and R212.

Belongs to the nitroreductase family. Homodimer. FMN serves as cofactor.

It catalyses the reaction 2 iodide + L-tyrosine + 2 NADP(+) = 3,5-diiodo-L-tyrosine + 2 NADPH + H(+). It carries out the reaction iodide + L-tyrosine + NADP(+) = 3-iodo-L-tyrosine + NADPH. The enzyme catalyses 3-iodo-L-tyrosine + iodide + NADP(+) = 3,5-diiodo-L-tyrosine + NADPH + H(+). The catalysed reaction is L-tyrosine + chloride + NADP(+) = 3-chloro-L-tyrosine + NADPH. It catalyses the reaction bromide + L-tyrosine + NADP(+) = 3-bromo-L-tyrosine + NADPH. In terms of biological role, catalyzes the dehalogenation of halotyrosines such as 3-iodo-L-tyrosine and 3,5-diiodo-L-tyrosine. Likely to also catalyze the dehalogenation of other halotyrosines such as 3-bromo-L-tyrosine, 3-chloro-L-tyrosine and 3-iodo-L-tyrosine. Activity towards 3-iodo-L-tyrosine is much stronger than activity towards 3,5-diiodo-L-tyrosine and 2-iodophenol. This Haliscomenobacter hydrossis (strain ATCC 27775 / DSM 1100 / LMG 10767 / O) protein is Iodotyrosine deiodinase.